The chain runs to 467 residues: Interleukin-6 receptor subunit alpha (467 aa).

An N-terminal signal peptide occupies residues 1 to 19; the sequence is MLAVGCALLTALLAAPGMA. The Ig-like C2-type domain occupies 20–112; it reads LAPRGCSKLE…AGSVRLLVDA (93 aa). Over 20 to 365 the chain is Extracellular; that stretch reads LAPRGCSKLE…VQDSASVPLP (346 aa). Intrachain disulfides connect cysteine 25/cysteine 193, cysteine 47/cysteine 96, cysteine 121/cysteine 132, and cysteine 165/cysteine 176. N-linked (GlcNAc...) asparagine glycosylation is found at asparagine 55 and asparagine 93. 2 Fibronectin type-III domains span residues 113 to 217 and 218 to 316; these read PPEE…LQPD and PPVN…IPWT. Residues asparagine 221 and asparagine 245 are each glycosylated (N-linked (GlcNAc...) asparagine). Residues 303 to 307 carry the WSXWS motif motif; it reads WSEWS. The interval 315–357 is disordered; sequence WTESRSSPAETELPLSTQAPTTNEDDEDISSKESANATSLPVQ. Composition is skewed to polar residues over residues 317-336 and 346-357; these read ESRS…APTT and KESANATSLPVQ. Asparagine 350 carries N-linked (GlcNAc...) asparagine glycosylation. Threonine 352 carries an O-linked (GlcNAc) threonine glycan. The chain crosses the membrane as a helical span at residues 366–386; sequence TFLVAGGSLAFGTLLCIGIIL. The Cytoplasmic segment spans residues 387–467; it reads RFKKTGQLQA…VSNRDYFFPR (81 aa). The segment at 428–467 is disordered; it reads ISPPVSPNSLGDNTSRNSRPEARGPQSPYDVSNRDYFFPR.

Belongs to the type I cytokine receptor family. Type 3 subfamily. As to quaternary structure, component of a hexamer of two molecules each of IL6, IL6R and IL6ST; first binds to IL6 to associate with the signaling subunit IL6ST. Interacts (via N-terminal ectodomain) with SORL1; this interaction may affect IL6-binding to IL6R, hence decrease IL6 'classic-signaling'. In terms of assembly, also interacts with SORL1; this interaction leads to soluble IL6R internalization. May form a trimeric complex with the soluble SORL1 ectodomain and circulating IL6 receptor; this interaction might stabilize circulating IL6, hence promote IL6 'trans-signaling'. In terms of processing, a short soluble form is also released from the membrane by proteolysis. The sIL6R is formed by limited proteolysis of membrane-bound receptors, a process referred to as ectodomain shedding. mIL6R is cleaved by the proteases ADAM10 and ADAM17. Glycosylated. Glycosylation is dispensable for transport, signaling, and cell-surface turnover. Glycosylation at Asn-55 is a protease-regulatory exosite. Glycosylation is required for ADAM17-mediated proteolysis. Expressed in liver.

It localises to the cell membrane. The protein resides in the secreted. Classic and trans-signaling are both inhibited by tocilizumab, a humanized monoclonal antibody that blocks interleukin IL6R signaling. In terms of biological role, part of the receptor for interleukin 6. Binds to IL6 with low affinity, but does not transduce a signal. Signal activation necessitate an association with IL6ST. Activation leads to the regulation of the immune response, acute-phase reactions and hematopoiesis. The interaction with membrane-bound IL6R and IL6ST stimulates 'classic signaling', the restricted expression of the IL6R limits classic IL6 signaling to only a few tissues such as the liver and some cells of the immune system. Whereas the binding of IL6 and soluble IL6R to IL6ST stimulates 'trans-signaling'. Alternatively, 'cluster signaling' occurs when membrane-bound IL6:IL6R complexes on transmitter cells activate IL6ST receptors on neighboring receiver cells. Signaling via the membrane-bound IL6R is mostly regenerative and anti-inflammatory. Drives naive CD4(+) T cells to the Th17 lineage, through 'cluster signaling' by dendritic cells. Its function is as follows. Soluble form of IL6 receptor (sIL6R) that acts as an agonist of IL6 activity. The IL6:sIL6R complex (hyper-IL6) binds to IL6ST/gp130 on cell surfaces and induces signaling also on cells that do not express membrane-bound IL6R in a process called IL6 'trans-signaling'. sIL6R is causative for the pro-inflammatory properties of IL6 and an important player in the development of chronic inflammatory diseases. In complex with IL6, is required for induction of VEGF production. Plays a protective role during liver injury, being required for maintenance of tissue regeneration. 'Trans-signaling' in central nervous system regulates energy and glucose homeostasis. This chain is Interleukin-6 receptor subunit alpha (IL6R), found in Sus scrofa (Pig).